The sequence spans 707 residues: Alpha-hemolysin translocation ATP-binding protein HlyB (707 aa).

One can recognise a Peptidase C39 domain in the interval 2-125 (DFHHKNNYGL…DLYQGNIILI (124 aa)). Histidine 83 is an active-site residue. In terms of domain architecture, ABC transmembrane type-1 spans 154 to 436 (FIETLIVSVF…LAQLWQDFQQ (283 aa)). The next 5 membrane-spanning stretches (helical) occupy residues 158–178 (LIVS…FQVV), 191–211 (LNII…LSGL), 269–289 (ALTS…MWYY), 295–315 (LVIL…SPIL), and 387–407 (AVMI…DLSI). In terms of domain architecture, ABC transporter spans 468–703 (ISFRNIRFRY…PESLYHYLHQ (236 aa)). 502-509 (GRSGSGKS) is an ATP binding site.

This sequence belongs to the ABC transporter superfamily. Protein-1 exporter (TC 3.A.1.109) family.

Its subcellular location is the cell membrane. Functionally, involved in the export of hemolysin A. The sequence is that of Alpha-hemolysin translocation ATP-binding protein HlyB (hlyB) from Proteus vulgaris.